We begin with the raw amino-acid sequence, 590 residues long: Aspartate--tRNA ligase (590 aa).

Position 174 (Glu-174) interacts with L-aspartate. The interval 198–201 (QLMK) is aspartate. Arg-220 is an L-aspartate binding site. Residues 220–222 (RDE) and Gln-229 contribute to the ATP site. His-443 contacts L-aspartate. An ATP-binding site is contributed by Glu-484. Residue Arg-491 participates in L-aspartate binding. 536–539 (GLDR) contacts ATP.

The protein belongs to the class-II aminoacyl-tRNA synthetase family. Type 1 subfamily. As to quaternary structure, homodimer.

The protein resides in the cytoplasm. It carries out the reaction tRNA(Asp) + L-aspartate + ATP = L-aspartyl-tRNA(Asp) + AMP + diphosphate. Functionally, catalyzes the attachment of L-aspartate to tRNA(Asp) in a two-step reaction: L-aspartate is first activated by ATP to form Asp-AMP and then transferred to the acceptor end of tRNA(Asp). The chain is Aspartate--tRNA ligase from Lactococcus lactis subsp. cremoris (strain MG1363).